The following is a 586-amino-acid chain: Serine/threonine-protein phosphatase 2A 56 kDa regulatory subunit delta isoform (586 aa).

The tract at residues 1 to 80 is disordered; it reads MSPSPSSSGK…QSSSRFNLSK (80 aa). A run of 6 repeats spans residues 21-22, 23-24, 25-26, 27-28, 29-30, and 31-32. Positions 21 to 36 are 8 X 2 AA approximate tandem repeats of Q-P; sequence QPQPQPQPQPQPQSQP. Residues 23–35 are compositionally biased toward pro residues; that stretch reads QPQPQPQPQPQSQ. The stretch at 33-34 is one 7; approximate repeat; it reads QS. Repeat 8 spans residues 35 to 36; sequence QP. Positions 36–45 are enriched in low complexity; sequence PPSSNKRPSN. Threonine 47 is modified (phosphothreonine). A phosphoserine mark is found at serine 72, serine 73, and serine 74. An SH3-binding; class I motif is present at residues 507 to 514; that stretch reads RAPPPLPP. A Nuclear localization signal motif is present at residues 532–549; that stretch reads KRTVETEAVQMLKDIKKE. Serine 557 and serine 582 each carry phosphoserine.

This sequence belongs to the phosphatase 2A regulatory subunit B56 family. As to quaternary structure, PP2A consists of a common heterodimeric core enzyme, composed of a 36 kDa catalytic subunit (subunit C) and a 65 kDa constant regulatory subunit (PR65 or subunit A), that associates with a variety of regulatory subunits. Proteins that associate with the core dimer include three families of regulatory subunits B (the R2/B/PR55/B55, R3/B''/PR72/PR130/PR59 and R5/B'/B56 families), the 48 kDa variable regulatory subunit, viral proteins, and cell signaling molecules. Interacts with the PP2A A subunit PPP2R1A. Interacts with SGO1. Interacts with ADCY8. Highly expressed in brain.

The protein localises to the nucleus. The B regulatory subunit might modulate substrate selectivity and catalytic activity, and might also direct the localization of the catalytic enzyme to a particular subcellular compartment. The chain is Serine/threonine-protein phosphatase 2A 56 kDa regulatory subunit delta isoform (PPP2R5D) from Oryctolagus cuniculus (Rabbit).